A 130-amino-acid chain; its full sequence is Anti-adapter protein IraD (130 aa).

It belongs to the GpW/Gp25 family. IraD subfamily. In terms of assembly, interacts with RssB.

It localises to the cytoplasm. Functionally, inhibits RpoS proteolysis by regulating RssB activity, thereby increasing the stability of the sigma stress factor RpoS during oxidative stress. Its effect on RpoS stability is due to its interaction with RssB, which probably blocks the interaction of RssB with RpoS, and the consequent delivery of the RssB-RpoS complex to the ClpXP protein degradation pathway. The chain is Anti-adapter protein IraD from Escherichia coli O45:K1 (strain S88 / ExPEC).